Reading from the N-terminus, the 197-residue chain is Methylamine utilization protein MauD (197 aa).

A helical transmembrane segment spans residues 3–23 (FLIASNILLWIAFLGVTVVML). The Thioredoxin domain maps to 48–180 (PDIGDMAPEF…LESLLEADKT (133 aa)).

It localises to the membrane. It participates in one-carbon metabolism; methylamine degradation. Functionally, may be specifically involved in the processing, transport, and/or maturation of the MADH beta-subunit. The chain is Methylamine utilization protein MauD (mauD) from Paracoccus versutus (Thiobacillus versutus).